We begin with the raw amino-acid sequence, 365 residues long: Peptide chain release factor 2 (365 aa).

An N5-methylglutamine modification is found at Q252.

Belongs to the prokaryotic/mitochondrial release factor family. Post-translationally, methylated by PrmC. Methylation increases the termination efficiency of RF2.

It localises to the cytoplasm. Its function is as follows. Peptide chain release factor 2 directs the termination of translation in response to the peptide chain termination codons UGA and UAA. This chain is Peptide chain release factor 2, found in Yersinia pseudotuberculosis serotype O:1b (strain IP 31758).